The primary structure comprises 141 residues: MTCVLKGCVNEVTVLGHETCSIGHANKLRKQVADMVGVTRRCAENNCGWFVCVVINDFTFDVYNCCGRSHLEKCRKRVETRNREIWKQIRRNQAENMSATAKKSHNSKTSKKKFKEDREFGTPKRFLRDDVPFGIDRLFAF.

Short sequence motifs (bipartite nuclear localization signal) lie at residues R75–R91 and K111–R128. A disordered region spans residues A94–D117. Positions K102–K113 are enriched in basic residues.

Its subcellular location is the host cytoplasm. The protein resides in the host nucleus. Its function is as follows. Weak suppressor of RNA-mediated gene silencing, also known as post-transcriptional gene silencing (PTGS), a mechanism of plant viral defense that performs sequence-specific inhibition of viral mRNAs expression. This could be used by the virus to infect efficiently the host the meristem cells. In Tobacco rattle virus (isolate PpK20) (TRV), this protein is Suppressor of RNA silencing.